We begin with the raw amino-acid sequence, 215 residues long: uncharacterized protein (215 aa).

Residues 98–119 (AAALAVAVASLCVCTLLLTHIV) traverse the membrane as a helical segment.

It is found in the membrane. This is an uncharacterized protein from Treponema pallidum (strain Nichols).